A 403-amino-acid polypeptide reads, in one-letter code: Large ribosomal subunit protein uL3 (403 aa).

Residues Met1–Pro37 form a disordered region. Ser13 is modified (phosphoserine). Basic residues predominate over residues Pro18–Ser31. A Glycyl lysine isopeptide (Lys-Gly) (interchain with G-Cter in SUMO2) cross-link involves residue Lys39. Position 136 is an N6-acetyllysine (Lys136). Glycyl lysine isopeptide (Lys-Gly) (interchain with G-Cter in SUMO2) cross-links involve residues Lys224 and Lys226. His245 bears the Tele-methylhistidine mark. Residues Lys286 and Lys294 each carry the N6-acetyllysine; alternate modification. A Glycyl lysine isopeptide (Lys-Gly) (interchain with G-Cter in SUMO2); alternate cross-link involves residue Lys286. Lys294 participates in a covalent cross-link: Glycyl lysine isopeptide (Lys-Gly) (interchain with G-Cter in SUMO1); alternate. Ser304 bears the Phosphoserine mark. Lys366 is modified (N6-acetyllysine; alternate). Lys366 is covalently cross-linked (Glycyl lysine isopeptide (Lys-Gly) (interchain with G-Cter in SUMO2); alternate). Residue Lys373 is modified to N6-acetyllysine. Residues Lys386, Lys393, and Lys399 each participate in a glycyl lysine isopeptide (Lys-Gly) (interchain with G-Cter in SUMO2) cross-link.

Belongs to the universal ribosomal protein uL3 family. In terms of assembly, component of the large ribosomal subunit. Interacts with DHX33. Post-translationally, constitutively monomethylated at His-245 by METTL18. Methylation at His-245 regulates translation elongation by slowing ribosome traversal on tyrosine codons: slower elongation provides enough time for proper folding of synthesized proteins and prevents cellular aggregation of tyrosine-rich proteins. It is not required for incorporation of RPL3 into ribosomes.

The protein localises to the nucleus. It is found in the nucleolus. It localises to the cytoplasm. Its function is as follows. Component of the large ribosomal subunit. The ribosome is a large ribonucleoprotein complex responsible for the synthesis of proteins in the cell. In Homo sapiens (Human), this protein is Large ribosomal subunit protein uL3 (RPL3).